The chain runs to 157 residues: Nascent polypeptide-associated complex subunit beta (157 aa).

Residues 1 to 31 (MPVDPEKLAKLQKSTAKKVGGSRVKAKKGVK) form a disordered region. In terms of domain architecture, NAC-A/B spans 33–98 (EQDDTKLIET…PQEKNITQLI (66 aa)). The segment at 125–157 (NPKDFGAAGEAGATEEANEDIPDLVDQKFDDVE) is disordered. The segment covering 130-139 (GAAGEAGATE) has biased composition (low complexity).

Belongs to the NAC-beta family. As to quaternary structure, part of the nascent polypeptide-associated complex (NAC), consisting of EGD2 and EGD1. NAC associates with ribosomes via EGD1.

The protein resides in the cytoplasm. The protein localises to the nucleus. Component of the nascent polypeptide-associated complex (NAC), a dynamic component of the ribosomal exit tunnel, protecting the emerging polypeptides from interaction with other cytoplasmic proteins to ensure appropriate nascent protein targeting. The NAC complex also promotes mitochondrial protein import by enhancing productive ribosome interactions with the outer mitochondrial membrane and blocks the inappropriate interaction of ribosomes translating non-secretory nascent polypeptides with translocation sites in the membrane of the endoplasmic reticulum. EGD1 may act as a transcription factor that exert a negative effect on the expression of several genes that are transcribed by RNA polymerase II. This is Nascent polypeptide-associated complex subunit beta (EGD1) from Lodderomyces elongisporus (strain ATCC 11503 / CBS 2605 / JCM 1781 / NBRC 1676 / NRRL YB-4239) (Yeast).